We begin with the raw amino-acid sequence, 400 residues long: NADH dehydrogenase-like protein MT1860 (400 aa).

It belongs to the NADH dehydrogenase family. FAD is required as a cofactor.

This chain is NADH dehydrogenase-like protein MT1860, found in Mycobacterium tuberculosis (strain CDC 1551 / Oshkosh).